A 366-amino-acid chain; its full sequence is Phenylalanine--tRNA ligase alpha subunit (366 aa).

Position 259 (E259) interacts with Mg(2+).

Belongs to the class-II aminoacyl-tRNA synthetase family. Phe-tRNA synthetase alpha subunit type 1 subfamily. As to quaternary structure, tetramer of two alpha and two beta subunits. Mg(2+) serves as cofactor.

The protein resides in the cytoplasm. It catalyses the reaction tRNA(Phe) + L-phenylalanine + ATP = L-phenylalanyl-tRNA(Phe) + AMP + diphosphate + H(+). The chain is Phenylalanine--tRNA ligase alpha subunit from Novosphingobium aromaticivorans (strain ATCC 700278 / DSM 12444 / CCUG 56034 / CIP 105152 / NBRC 16084 / F199).